The following is a 307-amino-acid chain: tRNA pseudouridine synthase B (307 aa).

The active-site Nucleophile is the Asp-38.

Belongs to the pseudouridine synthase TruB family. Type 1 subfamily.

It carries out the reaction uridine(55) in tRNA = pseudouridine(55) in tRNA. Its function is as follows. Responsible for synthesis of pseudouridine from uracil-55 in the psi GC loop of transfer RNAs. This chain is tRNA pseudouridine synthase B, found in Bacillus anthracis.